Consider the following 1375-residue polypeptide: Ubiquitin carboxyl-terminal hydrolase 47 (1375 aa).

K122 bears the N6-acetyllysine mark. Residues V188 to K564 form the USP domain. C197 serves as the catalytic Nucleophile. A disordered region spans residues D425 to N452. Over residues Q430–N452 the composition is skewed to polar residues. H503 acts as the Proton acceptor in catalysis. A Phosphoserine modification is found at S832. Disordered regions lie at residues T840–V859, L880–S968, and N983–K1024. Low complexity predominate over residues S882–S899. S910 is modified (phosphoserine). Residues L912–Q928 show a composition bias toward basic and acidic residues. Residues H929–F938 are compositionally biased toward polar residues. S933 carries the phosphoserine modification. Basic and acidic residues predominate over residues S940–N950. Over residues S953–S968 the composition is skewed to low complexity. The span at K997–W1006 shows a compositional bias: basic and acidic residues. Positions D1007–D1020 are enriched in acidic residues. S1013 carries the post-translational modification Phosphoserine. T1015 carries the phosphothreonine modification. S1017 carries the phosphoserine modification.

This sequence belongs to the peptidase C19 family. In terms of assembly, interacts with BTRC and FBXW11. Interacts with POLB. In terms of tissue distribution, expressed in skeletal muscle, heart and testis.

The protein resides in the cytoplasm. It catalyses the reaction Thiol-dependent hydrolysis of ester, thioester, amide, peptide and isopeptide bonds formed by the C-terminal Gly of ubiquitin (a 76-residue protein attached to proteins as an intracellular targeting signal).. In terms of biological role, ubiquitin-specific protease that specifically deubiquitinates monoubiquitinated DNA polymerase beta (POLB), stabilizing POLB thereby playing a role in base-excision repair (BER). Acts as a regulator of cell growth and genome integrity. May also indirectly regulate CDC25A expression at a transcriptional level. This is Ubiquitin carboxyl-terminal hydrolase 47 (USP47) from Homo sapiens (Human).